Here is a 349-residue protein sequence, read N- to C-terminus: Merozoite surface protein P38 (349 aa).

A signal peptide spans 1–21 (MKRWSIITGIVIIFCILTCKG). 2 consecutive 6-Cys domains span residues 22 to 149 (QVEN…ISNG) and 153 to 301 (KIPG…YLTN). Cystine bridges form between cysteine 77–cysteine 127, cysteine 157–cysteine 183, cysteine 197–cysteine 278, and cysteine 208–cysteine 276. 3 N-linked (GlcNAc...) asparagine glycosylation sites follow: asparagine 294, asparagine 295, and asparagine 301. The GPI-anchor amidated asparagine moiety is linked to residue asparagine 315. Positions 316 to 349 (SEIFERIEREEISFAFSSYLSITLILLYLFFLNF) are cleaved as a propeptide — removed in mature form.

It localises to the cell surface. The protein localises to the cell membrane. The polypeptide is Merozoite surface protein P38 (PFS38) (Plasmodium falciparum (isolate 3D7)).